The sequence spans 234 residues: Octanoyltransferase (234 aa).

In terms of domain architecture, BPL/LPL catalytic spans 35 to 221 (DGAPELVWFL…AFQQVFASPL (187 aa)). Residues 74 to 81 (RGGQYTYH), 150 to 152 (AIG), and 163 to 165 (GIS) contribute to the substrate site. Cys-181 (acyl-thioester intermediate) is an active-site residue.

It belongs to the LipB family.

The protein resides in the cytoplasm. It catalyses the reaction octanoyl-[ACP] + L-lysyl-[protein] = N(6)-octanoyl-L-lysyl-[protein] + holo-[ACP] + H(+). It participates in protein modification; protein lipoylation via endogenous pathway; protein N(6)-(lipoyl)lysine from octanoyl-[acyl-carrier-protein]: step 1/2. Its function is as follows. Catalyzes the transfer of endogenously produced octanoic acid from octanoyl-acyl-carrier-protein onto the lipoyl domains of lipoate-dependent enzymes. Lipoyl-ACP can also act as a substrate although octanoyl-ACP is likely to be the physiological substrate. The sequence is that of Octanoyltransferase from Hyphomonas neptunium (strain ATCC 15444).